The primary structure comprises 271 residues: Tropinone reductase homolog At2g29360 (271 aa).

22–46 (LVTGGSKGIGEAVVEELATLGARIH) is a binding site for NADP(+). Residue serine 155 participates in substrate binding. The active-site Proton acceptor is tyrosine 168.

This sequence belongs to the short-chain dehydrogenases/reductases (SDR) family. SDR65C subfamily.

Functionally, oxidoreductase active on cyclic ketones, but not on tropinone or nortropinone. The protein is Tropinone reductase homolog At2g29360 of Arabidopsis thaliana (Mouse-ear cress).